The chain runs to 394 residues: Ceramide glucosyltransferase (394 aa).

At 1 to 10 (MALLDLAQEG) the chain is on the lumenal side. A helical membrane pass occupies residues 11–32 (MALFGFVLFVVLWLMHFMSIIY). At 33–195 (TRLHLNKKAT…QVYFGTSHPR (163 aa)) the chain is on the cytoplasmic side. A short sequence motif (D1) is located at residue aspartate 92. The residue at position 117 (lysine 117) is an N6-acetyllysine. Aspartate 144 is a short sequence motif (D2). A helical membrane pass occupies residues 196–215 (SYISANVTGFKCVTGMSCLM). Residues 216–287 (RKDVLDQAGG…KLRINMLPAT (72 aa)) lie on the Lumenal side of the membrane. A short sequence motif (D3) is located at residue aspartate 236. Residue aspartate 236 is the Proton acceptor of the active site. The short motif at 272–276 (RMIRW) is the (Q/R)XXRW element. A helical transmembrane segment spans residues 288–304 (IICEPISECFVASLIIG). Topologically, residues 305–309 (WAAHH) are cytoplasmic. Residues 310 to 328 (VFRWDIMVFFMCHCLAWFI) form a helical membrane-spanning segment. Residues 329–348 (FDYIQLRGVQGGTLCFSKLD) are Lumenal-facing. The chain crosses the membrane as a helical span at residues 349 to 369 (YAVAWFIRESMTIYIFLSALW). Topologically, residues 370-394 (DPTISWRTGRYRLRCGGTAEEILDV) are cytoplasmic.

This sequence belongs to the glycosyltransferase 2 family. In terms of assembly, interacts with RTN1; regulates the ceramide glucosyltransferase activity of UGCG.

The protein localises to the golgi apparatus membrane. The enzyme catalyses an N-acylsphing-4-enine + UDP-alpha-D-glucose = a beta-D-glucosyl-(1&lt;-&gt;1')-N-acylsphing-4-enine + UDP + H(+). The catalysed reaction is UDP-alpha-D-xylose + an N-acylsphing-4-enine = a beta-D-xylosyl-(1&lt;-&gt;1')-N-acylsphing-4-enine + UDP + H(+). It catalyses the reaction N-(9Z-octadecenoyl)-sphing-4-enine + UDP-alpha-D-xylose = beta-D-xylosyl-(1&lt;-&gt;1')-N-(9Z-octadecenoyl)-sphing-4-enine + UDP + H(+). It participates in lipid metabolism; sphingolipid metabolism. Functionally, participates in the initial step of the glucosylceramide-based glycosphingolipid/GSL synthetic pathway at the cytosolic surface of the Golgi. Catalyzes the transfer of glucose from UDP-glucose to ceramide to produce glucosylceramide/GlcCer (such as beta-D-glucosyl-(1&lt;-&gt;1')-N-acylsphing-4-enine). Glucosylceramide is the core component of glycosphingolipids/GSLs, amphipathic molecules consisting of a ceramide lipid moiety embedded in the outer leaflet of the membrane, linked to one of hundreds of different externally oriented oligosaccharide structures. Glycosphingolipids are essential components of membrane microdomains that mediate membrane trafficking and signal transduction. They are implicated in many fundamental cellular processes, including growth, differentiation, migration, morphogenesis, cell-to-cell and cell-to-matrix interactions. They are required for instance in the proper development and functioning of the nervous system. As an example of their role in signal transduction, they regulate the leptin receptor/LEPR in the leptin-mediated signaling pathway. They also play an important role in the establishment of the skin barrier regulating keratinocyte differentiation and the proper assembly of the cornified envelope. The biosynthesis of GSLs is also required for the proper intestinal endocytic uptake of nutritional lipids. Catalyzes the synthesis of xylosylceramide/XylCer (such as beta-D-xylosyl-(1&lt;-&gt;1')-N-acylsphing-4-enine) using UDP-Xyl as xylose donor. The sequence is that of Ceramide glucosyltransferase from Mus musculus (Mouse).